The following is a 309-amino-acid chain: Porphobilinogen deaminase (309 aa).

Cys241 is modified (S-(dipyrrolylmethanemethyl)cysteine).

It belongs to the HMBS family. Monomer. Requires dipyrromethane as cofactor.

It catalyses the reaction 4 porphobilinogen + H2O = hydroxymethylbilane + 4 NH4(+). Its pathway is porphyrin-containing compound metabolism; protoporphyrin-IX biosynthesis; coproporphyrinogen-III from 5-aminolevulinate: step 2/4. In terms of biological role, tetrapolymerization of the monopyrrole PBG into the hydroxymethylbilane pre-uroporphyrinogen in several discrete steps. In Bacillus cereus (strain AH820), this protein is Porphobilinogen deaminase.